A 540-amino-acid chain; its full sequence is Chaperonin GroEL (540 aa).

ATP is bound by residues 30-33, lysine 51, 87-91, glycine 415, and aspartate 495; these read TLGP and DGTTT.

It belongs to the chaperonin (HSP60) family. Forms a cylinder of 14 subunits composed of two heptameric rings stacked back-to-back. Interacts with the co-chaperonin GroES.

The protein localises to the cytoplasm. The catalysed reaction is ATP + H2O + a folded polypeptide = ADP + phosphate + an unfolded polypeptide.. Functionally, together with its co-chaperonin GroES, plays an essential role in assisting protein folding. The GroEL-GroES system forms a nano-cage that allows encapsulation of the non-native substrate proteins and provides a physical environment optimized to promote and accelerate protein folding. The chain is Chaperonin GroEL from Rhodothermus marinus (Rhodothermus obamensis).